A 264-amino-acid chain; its full sequence is 5'-nucleotidase SurE (264 aa).

4 residues coordinate a divalent metal cation: aspartate 8, aspartate 9, serine 39, and asparagine 95.

It belongs to the SurE nucleotidase family. The cofactor is a divalent metal cation.

Its subcellular location is the cytoplasm. It carries out the reaction a ribonucleoside 5'-phosphate + H2O = a ribonucleoside + phosphate. Its function is as follows. Nucleotidase that shows phosphatase activity on nucleoside 5'-monophosphates. This is 5'-nucleotidase SurE from Syntrophomonas wolfei subsp. wolfei (strain DSM 2245B / Goettingen).